The primary structure comprises 693 residues: MATQDFLVELGTEELPPKALKPLSDAFTQGIVKGLEEAGVAFGAVESFAAPRRLAVRIRDLADAQPDKSVEKRGPAVKAAFDDSGNPTRALTGFATSLGITPDQLDTMETDKGAWLVYRTVEKGKPTVELMPDLVEKSLAALPIPKRMRWGAWKTEFVRPVHWLILLYGNKVIEAPVMNLKPGNKTRGHRFHCPKELIVPTPADYEVVLKQEGYVLADFAERREQIRAGVAALAEKEAGGKAVIDEDLLDEVTALNEWPVPLMGRFEDRFLEVPAEALISSMKEHQKYFHVVDASDNMLPLFITVANLESKDPSQVISGNEKVIRPRLSDAAFFYETDRKTRLEDRIESLKPIVFQDKLGSIYDKSVRVAALAKKIAEAINSDPALAERAAMLAKTDLVTEMVLEFTDLQGIMGQYYAANDGEHEDVAKALNEQYMPRFAGDDLPTTLTGCAVAIADRIDSLVGLFGINQPPSGTRDPFALRRASLGVLRIIIERQLPLDLQTVCEWAEQNFTVLTENNTASTVVDYMLDRFRAHYDEQGICAEVYLAVHARRPTRPLDFDRRVKAVEAFRQLPEAQALAGANKRVSNILTKQGGDSIGETVDTALLQDAAEKTLAAKVEEQAQQVLPMFEQGDYASALTSLASLREPVDTFFDEVMVMADDDAVRNNRLALLNRLRNLFLRVADISLLPTAG.

Residues 65–74 (QPDKSVEKRG) are compositionally biased toward basic and acidic residues. The interval 65-84 (QPDKSVEKRGPAVKAAFDDS) is disordered.

This sequence belongs to the class-II aminoacyl-tRNA synthetase family. As to quaternary structure, tetramer of two alpha and two beta subunits.

The protein resides in the cytoplasm. It carries out the reaction tRNA(Gly) + glycine + ATP = glycyl-tRNA(Gly) + AMP + diphosphate. The sequence is that of Glycine--tRNA ligase beta subunit from Marinobacter nauticus (strain ATCC 700491 / DSM 11845 / VT8) (Marinobacter aquaeolei).